Consider the following 726-residue polypeptide: Beta-adducin (726 aa).

Residues 1 to 25 (MSEETVPEAASPPPPQGQPYFDRFS) form a disordered region. Phosphoserine is present on residues S11 and S25. Residue T55 is modified to Phosphothreonine; by PKA. Phosphoserine occurs at positions 60 and 344. The interaction with calmodulin stretch occupies residues 425-444 (KQQKEKTRWLNTPNTYLRVN). Residues 525 to 726 (AEKSRSPSTE…KSKKKEKVES (202 aa)) form a disordered region. A phosphoserine mark is found at S530 and S532. Position 533 is a phosphothreonine (T533). S535 carries the post-translational modification Phosphoserine. Over residues 566-586 (EEYKKEVERKKLELDGEKETA) the composition is skewed to basic and acidic residues. Low complexity predominate over residues 588 to 606 (EEPGSPAKSAPASPVQSPA). Residues S592, S596, S600, and S604 each carry the phosphoserine modification. Position 611 is a phosphothreonine (T611). Phosphoserine is present on residues S613, S617, S619, and S621. Positions 621 to 631 (SLEEGTKKTET) are enriched in basic and acidic residues. The span at 632–645 (SKAATTEPETTQPE) shows a compositional bias: low complexity. The segment covering 665–674 (GLSQMTTSAD) has biased composition (polar residues). T675 carries the post-translational modification Phosphothreonine. 6 positions are modified to phosphoserine: S686, S689, S693, S697, S699, and S701. The segment covering 689–701 (SGPMSPEGSPSKS) has biased composition (low complexity). The span at 702-726 (PSKKKKKFRTPSFLKKSKKKEKVES) shows a compositional bias: basic residues. S703 is subject to Phosphoserine; by PKC. Residues 704–721 (KKKKKFRTPSFLKKSKKK) are interaction with calmodulin. S713 is modified (phosphoserine; by PKA and PKC).

This sequence belongs to the aldolase class II family. Adducin subfamily. In terms of assembly, heterodimer of an alpha and a beta subunit. Found in a complex with ADD2, DMTN and SLC2A1. Interacts with SLC2A1. In terms of processing, the N-terminus is blocked. Expressed mainly in brain, spleen, kidney cortex and medulla, and heart. Also expressed in human umbilical vein endothelial cells, human vascular smooth muscle cells, kidney tubular cells and K-562 cell line.

It is found in the cytoplasm. The protein resides in the cytoskeleton. The protein localises to the cell membrane. In terms of biological role, membrane-cytoskeleton-associated protein that promotes the assembly of the spectrin-actin network. Binds to the erythrocyte membrane receptor SLC2A1/GLUT1 and may therefore provide a link between the spectrin cytoskeleton to the plasma membrane. Binds to calmodulin. Calmodulin binds preferentially to the beta subunit. This chain is Beta-adducin (ADD2), found in Homo sapiens (Human).